The following is a 306-amino-acid chain: Proline-rich transmembrane protein 1 (306 aa).

Positions 1–142 are disordered; the sequence is MSSEKSGLPD…PPPAPAQTAQ (142 aa). Residues 1-223 are Cytoplasmic-facing; it reads MSSEKSGLPD…LEPRRPPHDY (223 aa). Residues 15–36 are compositionally biased toward pro residues; sequence TSPPPYNAPQPPAEPPAPPPQA. The span at 40–49 shows a compositional bias: basic residues; it reads SHHHHHHHYH. Composition is skewed to pro residues over residues 87 to 111 and 121 to 137; these read HAPP…PPDP and PLPP…PPAP. Residues 224 to 244 traverse the membrane as a helical segment; sequence MPIAVLTTICCFWPTGIIAIF. The Extracellular portion of the chain corresponds to 245–275; sequence KAVQVRTALARGDMVSAEIASREARNFSFIS. The helical intramembrane region spans 276–296; it reads LAVGIAAMVLCTILTVVIIIA. The Extracellular segment spans residues 297–306; that stretch reads AQHHENYWDP.

It belongs to the CD225/Dispanin family. In terms of assembly, component of the outer core of AMPAR complex. AMPAR complex consists of an inner core made of 4 pore-forming GluA/GRIA proteins (GRIA1, GRIA2, GRIA3 and GRIA4) and 4 major auxiliary subunits arranged in a twofold symmetry. One of the two pairs of distinct binding sites is occupied either by CNIH2, CNIH3 or CACNG2, CACNG3. The other harbors CACNG2, CACNG3, CACNG4, CACNG8 or GSG1L. This inner core of AMPAR complex is complemented by outer core constituents binding directly to the GluA/GRIA proteins at sites distinct from the interaction sites of the inner core constituents. Outer core constituents include at least PRRT1, PRRT2, CKAMP44/SHISA9, FRRS1L and NRN1. The proteins of the inner and outer core serve as a platform for other, more peripherally associated AMPAR constituents. Alone or in combination, these auxiliary subunits control the gating and pharmacology of the AMPAR complex and profoundly impact their biogenesis and protein processing.

It localises to the cell membrane. The protein localises to the synapse. Required to maintain a pool of extrasynaptic AMPA-regulated glutamate receptors (AMPAR) which is necessary for synapse development and function. Regulates basal AMPAR function and synaptic transmission during development but is dispensable at mature hippocampal synapses. Plays a role in regulating basal phosphorylation levels of glutamate receptor GRIA1 and promotes GRIA1 and GRIA2 cell surface expression. In Homo sapiens (Human), this protein is Proline-rich transmembrane protein 1.